Here is a 316-residue protein sequence, read N- to C-terminus: Acetyl-coenzyme A carboxylase carboxyl transferase subunit alpha (316 aa).

The CoA carboxyltransferase C-terminal domain occupies 36 to 290 (LLEERLARLR…KEALLKALEE (255 aa)).

The protein belongs to the AccA family. In terms of assembly, acetyl-CoA carboxylase is a heterohexamer composed of biotin carboxyl carrier protein (AccB), biotin carboxylase (AccC) and two subunits each of ACCase subunit alpha (AccA) and ACCase subunit beta (AccD).

The protein localises to the cytoplasm. It catalyses the reaction N(6)-carboxybiotinyl-L-lysyl-[protein] + acetyl-CoA = N(6)-biotinyl-L-lysyl-[protein] + malonyl-CoA. Its pathway is lipid metabolism; malonyl-CoA biosynthesis; malonyl-CoA from acetyl-CoA: step 1/1. Its function is as follows. Component of the acetyl coenzyme A carboxylase (ACC) complex. First, biotin carboxylase catalyzes the carboxylation of biotin on its carrier protein (BCCP) and then the CO(2) group is transferred by the carboxyltransferase to acetyl-CoA to form malonyl-CoA. In Thermus thermophilus (strain ATCC 27634 / DSM 579 / HB8), this protein is Acetyl-coenzyme A carboxylase carboxyl transferase subunit alpha.